Here is a 130-residue protein sequence, read N- to C-terminus: Large ribosomal subunit protein bL12 (130 aa).

It belongs to the bacterial ribosomal protein bL12 family. In terms of assembly, homodimer. Part of the ribosomal stalk of the 50S ribosomal subunit. Forms a multimeric L10(L12)X complex, where L10 forms an elongated spine to which 2 to 4 L12 dimers bind in a sequential fashion. Binds GTP-bound translation factors.

Functionally, forms part of the ribosomal stalk which helps the ribosome interact with GTP-bound translation factors. Is thus essential for accurate translation. This is Large ribosomal subunit protein bL12 from Cutibacterium acnes (strain DSM 16379 / KPA171202) (Propionibacterium acnes).